Consider the following 164-residue polypeptide: Succinate dehydrogenase assembly factor 3, mitochondrial (164 aa).

The N-terminal 51 residues, 1–51, are a transit peptide targeting the mitochondrion; the sequence is MRPTLLRLANASGPLPLSVSQASVQLIPPIPLYRRLLRAHRLLPVDMRYMG. Residues 136–145 show a composition bias toward basic and acidic residues; that stretch reads KSPEQIEREA. Positions 136 to 164 are disordered; sequence KSPEQIEREANSAGVSPVNPNDPTTAGNS. Positions 153–164 are enriched in polar residues; it reads VNPNDPTTAGNS.

Belongs to the complex I LYR family. SDHAF3 subfamily. In terms of assembly, interacts with the iron-sulfur protein subunit within the SDH catalytic dimer.

It is found in the mitochondrion matrix. Plays an essential role in the assembly of succinate dehydrogenase (SDH), an enzyme complex (also referred to as respiratory complex II) that is a component of both the tricarboxylic acid (TCA) cycle and the mitochondrial electron transport chain, and which couples the oxidation of succinate to fumarate with the reduction of ubiquinone (coenzyme Q) to ubiquinol. Promotes maturation of the iron-sulfur protein subunit of the SDH catalytic dimer, protecting it from the deleterious effects of oxidants. May act together with SDHAF1. The chain is Succinate dehydrogenase assembly factor 3, mitochondrial from Cryptococcus neoformans var. neoformans serotype D (strain B-3501A) (Filobasidiella neoformans).